Reading from the N-terminus, the 252-residue chain is Ribosomal RNA small subunit methyltransferase J (252 aa).

Residues 101–102 (RD), 117–118 (ER), 153–154 (SS), and D171 each bind S-adenosyl-L-methionine.

The protein belongs to the methyltransferase superfamily. RsmJ family.

The protein localises to the cytoplasm. It catalyses the reaction guanosine(1516) in 16S rRNA + S-adenosyl-L-methionine = N(2)-methylguanosine(1516) in 16S rRNA + S-adenosyl-L-homocysteine + H(+). Its function is as follows. Specifically methylates the guanosine in position 1516 of 16S rRNA. The chain is Ribosomal RNA small subunit methyltransferase J from Salmonella paratyphi B (strain ATCC BAA-1250 / SPB7).